We begin with the raw amino-acid sequence, 298 residues long: MSPQYHFYFVSFRNLVLNEKCLRSKKQVMKSFNWYKTDRYFDPHNILQHHSRAIEKTRYKLGMQTSSESTDAKSDFLDEPSAYLIEKNVALPKDIFGSYLSYWIYEVTRHKAAVILLVLIVTSILLLVFFYNTEFCVAFEILLFSFCFPGTCMVVIAFSEPIGDREFKVKLLMEIITRKPAVKGKEWRTITYKMNQYLFDHGLWDTPYYFYRDEDCHRYFLSLIKGRTFKKQKESSASNVKDAQSNDETAGTPNEAAESSSFSAGPNFIKLLTKAAEIEQQFQKEYWRQEYPGVDEFF.

At 1–111 (MSPQYHFYFV…YWIYEVTRHK (111 aa)) the chain is on the cytoplasmic side. A helical transmembrane segment spans residues 112-132 (AAVILLVLIVTSILLLVFFYN). At 133–137 (TEFCV) the chain is on the extracellular side. Residues 138–158 (AFEILLFSFCFPGTCMVVIAF) form a helical membrane-spanning segment. Residues 159–298 (SEPIGDREFK…QEYPGVDEFF (140 aa)) lie on the Cytoplasmic side of the membrane. Positions 235 to 262 (SSASNVKDAQSNDETAGTPNEAAESSSF) are disordered. Positions 297 to 298 (FF) are COPII binding.

It belongs to the DUP/COS family. Interacts with PRM8. Binds to COPII coated vesicles.

It localises to the cell membrane. Its function is as follows. May be involved in endoplasmic reticulum exit trafficking of proteins. The protein is Pheromone-regulated membrane protein 9 (PRM9) of Saccharomyces cerevisiae (strain ATCC 204508 / S288c) (Baker's yeast).